The primary structure comprises 393 residues: Stearoyl-[acyl-carrier-protein] 9-desaturase, chloroplastic (393 aa).

A chloroplast-targeting transit peptide spans 1-31 (MASMVAFRPEAFLCFSPPKTTRSTRSPRISM). Positions 135, 173, 176, 226, 259, and 262 each coordinate Fe cation.

Belongs to the fatty acid desaturase type 2 family. Homodimer. The cofactor is Fe(2+).

Its subcellular location is the plastid. The protein resides in the chloroplast. The enzyme catalyses octadecanoyl-[ACP] + 2 reduced [2Fe-2S]-[ferredoxin] + O2 + 2 H(+) = (9Z)-octadecenoyl-[ACP] + 2 oxidized [2Fe-2S]-[ferredoxin] + 2 H2O. The protein operates within lipid metabolism; fatty acid metabolism. Converts stearoyl-ACP to oleoyl-ACP by introduction of a cis double bond between carbons 9 and 10 of the acyl chain. The polypeptide is Stearoyl-[acyl-carrier-protein] 9-desaturase, chloroplastic (Elaeis guineensis var. tenera (Oil palm)).